Here is a 545-residue protein sequence, read N- to C-terminus: Chaperonin GroEL 4 (545 aa).

Residues 30-33, Lys51, 87-91, Gly415, and Asp495 each bind ATP; these read TLGP and DGTTT.

The protein belongs to the chaperonin (HSP60) family. As to quaternary structure, forms a cylinder of 14 subunits composed of two heptameric rings stacked back-to-back. Interacts with the co-chaperonin GroES.

The protein resides in the cytoplasm. It carries out the reaction ATP + H2O + a folded polypeptide = ADP + phosphate + an unfolded polypeptide.. Functionally, together with its co-chaperonin GroES, plays an essential role in assisting protein folding. The GroEL-GroES system forms a nano-cage that allows encapsulation of the non-native substrate proteins and provides a physical environment optimized to promote and accelerate protein folding. This Rhizobium meliloti (strain 1021) (Ensifer meliloti) protein is Chaperonin GroEL 4.